Here is a 365-residue protein sequence, read N- to C-terminus: Protein-glutamate methylesterase/protein-glutamine glutaminase (365 aa).

In terms of domain architecture, Response regulatory spans 5–122 (KVLIVDDSAF…SLDIRKIGEK (118 aa)). At aspartate 56 the chain carries 4-aspartylphosphate. Residues 146–155 (IKKEKQDESS) show a composition bias toward basic and acidic residues. The interval 146–167 (IKKEKQDESSTPKPQVEKTSGL) is disordered. The span at 156–167 (TPKPQVEKTSGL) shows a compositional bias: polar residues. One can recognise a CheB-type methylesterase domain in the interval 177–363 (ILIGSSTGGP…LEIIKFAKKI (187 aa)). Catalysis depends on residues serine 182, histidine 208, and aspartate 305.

Belongs to the CheB family. Phosphorylated by CheA. Phosphorylation of the N-terminal regulatory domain activates the methylesterase activity.

It is found in the cytoplasm. The enzyme catalyses [protein]-L-glutamate 5-O-methyl ester + H2O = L-glutamyl-[protein] + methanol + H(+). It catalyses the reaction L-glutaminyl-[protein] + H2O = L-glutamyl-[protein] + NH4(+). Its function is as follows. Involved in chemotaxis. Part of a chemotaxis signal transduction system that modulates chemotaxis in response to various stimuli. Catalyzes the demethylation of specific methylglutamate residues introduced into the chemoreceptors (methyl-accepting chemotaxis proteins or MCP) by CheR. Also mediates the irreversible deamidation of specific glutamine residues to glutamic acid. The sequence is that of Protein-glutamate methylesterase/protein-glutamine glutaminase from Methanococcus maripaludis (strain DSM 14266 / JCM 13030 / NBRC 101832 / S2 / LL).